The following is a 74-amino-acid chain: Veswaprin-a (74 aa).

A signal peptide spans 1–24; sequence MSSGGLLLLLGLLTLWAEVTPISG. One can recognise a WAP domain in the interval 27 to 71; that stretch reads RPKKPGLCPPRPQKPCVKECKNDWSCPGQQKCCNYGCIDECRDPI. 4 disulfide bridges follow: Cys34–Cys59, Cys42–Cys63, Cys46–Cys58, and Cys52–Cys67.

Belongs to the venom waprin family. In terms of tissue distribution, expressed by the venom gland.

Its subcellular location is the secreted. In terms of biological role, damages membranes of susceptible bacteria. Has no hemolytic activity. Not toxic to mice. Does not inhibit the proteinases elastase and cathepsin G. This chain is Veswaprin-a, found in Demansia vestigiata (Lesser black whip snake).